We begin with the raw amino-acid sequence, 739 residues long: Gamma-tubulin complex component 4 homolog (739 aa).

This sequence belongs to the TUBGCP family.

Its subcellular location is the cytoplasm. The protein localises to the cytoskeleton. It localises to the microtubule organizing center. Functionally, gamma-tubulin complex is necessary for microtubule nucleation at the microtubule organizing centers (MTOCs). This is Gamma-tubulin complex component 4 homolog (85P) from Medicago truncatula (Barrel medic).